Consider the following 105-residue polypeptide: Integration host factor subunit alpha (105 aa).

Belongs to the bacterial histone-like protein family. In terms of assembly, heterodimer of an alpha and a beta chain.

Functionally, this protein is one of the two subunits of integration host factor, a specific DNA-binding protein that functions in genetic recombination as well as in transcriptional and translational control. This chain is Integration host factor subunit alpha, found in Xanthobacter autotrophicus (strain ATCC BAA-1158 / Py2).